We begin with the raw amino-acid sequence, 240 residues long: Ribonuclease PH (240 aa).

Phosphate contacts are provided by residues Arg87 and 125-127 (GTR).

It belongs to the RNase PH family. As to quaternary structure, homohexameric ring arranged as a trimer of dimers.

It carries out the reaction tRNA(n+1) + phosphate = tRNA(n) + a ribonucleoside 5'-diphosphate. In terms of biological role, phosphorolytic 3'-5' exoribonuclease that plays an important role in tRNA 3'-end maturation. Removes nucleotide residues following the 3'-CCA terminus of tRNAs; can also add nucleotides to the ends of RNA molecules by using nucleoside diphosphates as substrates, but this may not be physiologically important. Probably plays a role in initiation of 16S rRNA degradation (leading to ribosome degradation) during starvation. This Pseudomonas putida (strain GB-1) protein is Ribonuclease PH.